The sequence spans 242 residues: MVQFKLSTASLLALASYAAAHGYVSSIQADGQTYPGADPHNPNPESPGWQAENTDLGFVEPSAFSTPAIACHKNARAPPAHATVQAGSTIKLTWNTWPESHHGPVLDYIAPCNGDCSSASAGSLNFVKIAEKGLISGSNPGFWAADELIQNGNSWEVTIPANLAPGKYVLRHEIIALHSAGNPNGAQAYPQCINLEVTGGGSATPSGQPATSFYSPNDPGILFNLYQSFDSYPIPGPAVWSG.

The N-terminal stretch at 1-20 (MVQFKLSTASLLALASYAAA) is a signal peptide. Histidine 21 contributes to the Cu(2+) binding site. Residues 31 to 53 (GQTYPGADPHNPNPESPGWQAEN) form a disordered region. Intrachain disulfides connect cysteine 71–cysteine 192 and cysteine 112–cysteine 116. Histidine 101 serves as a coordination point for Cu(2+). Histidine 178 and glutamine 187 together coordinate O2. Tyrosine 189 is a binding site for Cu(2+).

It belongs to the polysaccharide monooxygenase AA9 family. Cu(2+) is required as a cofactor.

It is found in the secreted. It catalyses the reaction [(1-&gt;4)-beta-D-glucosyl]n+m + reduced acceptor + O2 = 4-dehydro-beta-D-glucosyl-[(1-&gt;4)-beta-D-glucosyl]n-1 + [(1-&gt;4)-beta-D-glucosyl]m + acceptor + H2O.. Functionally, lytic polysaccharide monooxygenase (LPMO) that depolymerizes crystalline and amorphous polysaccharides via the oxidation of scissile alpha- or beta-(1-4)-glycosidic bonds, yielding C1 or C4 oxidation products. Catalysis by LPMOs requires the reduction of the active-site copper from Cu(II) to Cu(I) by a reducing agent and H(2)O(2) or O(2) as a cosubstrate. Active on hemicelluloses, including xylan, glucomannan, and xyloglucan. Shows clear activity on cellooligosaccharides, generating C4 oxidation products. Has no activity on ivory nut mannan (INM), a linear beta-1,4-linked mannan without substitutions. The chain is AA9 family lytic polysaccharide monooxygenase F from Malbranchea cinnamomea (Thermophilic fungus).